Consider the following 261-residue polypeptide: Acidic leucine-rich nuclear phosphoprotein 32 family member B (261 aa).

LRR repeat units follow at residues 16–40, 43–64, 65–87, and 89–110; these read PAAVRELVLDNCKSNDGKIEGLTAE, NLEFLSLINVGLISVSNLPKLP, KLKKLELSDNRICGGLDMLAEKL, and NLTHLNLSGNKLKDISTLEPLK. The residue at position 86 (Lys-86) is an N6-acetyllysine. An LRRCT domain is found at 123 to 161; it reads CEVTNLNDYRESVFKLLPQLTYLDGYDREDREAPDSDAE. The segment at 149 to 261 is disordered; it reads DREDREAPDS…RETDDEGEDD (113 aa). A compositionally biased stretch (acidic residues) spans 157-243; sequence DSDAEVDGVD…DEDEDEEEEE (87 aa). Residue Ser-158 is modified to Phosphoserine. A compositionally biased stretch (basic and acidic residues) spans 244–254; the sequence is SGKGEKRKRET. The Nuclear localization signal signature appears at 249–252; sequence KRKR. Thr-254 bears the Phosphothreonine mark.

The protein belongs to the ANP32 family. In terms of assembly, interacts with histones H3 and H4. Interacts with KLF5; this interaction induces promoter region-specific histone incorporation and inhibition of histone acetylation by ANP32B. Post-translationally, some Glu residues are glycylated by TTLL8; a modification that generates a side chains of glycine on the gamma-carboxyl groups of specific glutamate residues. In terms of processing, directly cleaved by caspase-3/CASP3.

It localises to the nucleus. Multifunctional protein that is involved in the regulation of many processes including cell proliferation, apoptosis, cell cycle progression or transcription. Regulates the proliferation of neuronal stem cells, differentiation of leukemic cells and progression from G1 to S phase of the cell cycle. As negative regulator of caspase-3-dependent apoptosis, may act as an antagonist of ANP32A in regulating tissue homeostasis. Exhibits histone chaperone properties, able to recruit histones to certain promoters, thus regulating the transcription of specific genes. Also plays an essential role in the nucleocytoplasmic transport of specific mRNAs via the uncommon nuclear mRNA export receptor XPO1/CRM1. Participates in the regulation of adequate adaptive immune responses by acting on mRNA expression and cell proliferation. The polypeptide is Acidic leucine-rich nuclear phosphoprotein 32 family member B (ANP32B) (Bos taurus (Bovine)).